The following is a 792-amino-acid chain: Endonuclease MutS2 (792 aa).

335-342 (GPNTGGKT) contacts ATP. The 76-residue stretch at 717-792 (VDLRGLNLEE…GAGVTIVKLK (76 aa)) folds into the Smr domain.

Belongs to the DNA mismatch repair MutS family. MutS2 subfamily. Homodimer. Binds to stalled ribosomes, contacting rRNA.

Endonuclease that is involved in the suppression of homologous recombination and thus may have a key role in the control of bacterial genetic diversity. Functionally, acts as a ribosome collision sensor, splitting the ribosome into its 2 subunits. Detects stalled/collided 70S ribosomes which it binds and splits by an ATP-hydrolysis driven conformational change. Acts upstream of the ribosome quality control system (RQC), a ribosome-associated complex that mediates the extraction of incompletely synthesized nascent chains from stalled ribosomes and their subsequent degradation. Probably generates substrates for RQC. In Clostridioides difficile (strain 630) (Peptoclostridium difficile), this protein is Endonuclease MutS2.